Here is a 249-residue protein sequence, read N- to C-terminus: Cobalt transport protein CbiM (249 aa).

An N-terminal signal peptide occupies residues 1-27 (MKPLHRWLPVVIGAALLIIFESRAAYA). 6 helical membrane passes run 33-53 (GFLPPVWAGFWFIVVLPFWVL), 70-90 (LLLGFAAAFAFVLSALKIPSV), 102-122 (LGTILFGPLVMSVLGSIVLLF), 134-154 (TLGANAFSMAVVGPFVAWLIW), 161-181 (APIWLTVFLAAALADLFTYVV), and 207-227 (IFAVTQIPLAISEGILTVLIF).

This sequence belongs to the CbiM family. As to quaternary structure, forms an energy-coupling factor (ECF) transporter complex composed of an ATP-binding protein (A component, CbiO), a transmembrane protein (T component, CbiQ) and 2 possible substrate-capture proteins (S components, CbiM and CbiN) of unknown stoichimetry.

Its subcellular location is the cell membrane. It participates in cofactor biosynthesis; adenosylcobalamin biosynthesis. In terms of biological role, part of the energy-coupling factor (ECF) transporter complex CbiMNOQ involved in cobalt import. The polypeptide is Cobalt transport protein CbiM (Roseiflexus sp. (strain RS-1)).